We begin with the raw amino-acid sequence, 332 residues long: Acryloyl-coenzyme A reductase (332 aa).

Cys38 contributes to the Zn(2+) binding site. Tyr39 provides a ligand contact to NADP(+). Zn(2+) contacts are provided by His60, Asp90, Cys93, Cys96, Cys104, and Cys146. NADP(+) is bound by residues 172-175 (SGGV) and 194-196 (TTS).

It belongs to the zinc-containing alcohol dehydrogenase family. As to quaternary structure, monomer. Zn(2+) is required as a cofactor.

It catalyses the reaction propanoyl-CoA + NADP(+) = acryloyl-CoA + NADPH + H(+). In terms of biological role, plays a role in autotrophic carbon fixation via the 3-hydroxypropionate/4-hydroxybutyrate cycle. Catalyzes the acryloyl-CoA dependent NADPH oxidation and formation of propionyl-CoA. The sequence is that of Acryloyl-coenzyme A reductase from Metallosphaera sedula (strain ATCC 51363 / DSM 5348 / JCM 9185 / NBRC 15509 / TH2).